The primary structure comprises 801 residues: Na(+)/H(+) antiporter subunit A1 (801 aa).

20 helical membrane passes run M1 to L21, L30 to S50, L79 to I99, L117 to F137, L166 to A186, P206 to V226, F228 to T250, I265 to F285, I300 to A320, F337 to I357, L373 to S393, L427 to I447, I472 to P492, G522 to I542, L591 to F611, V623 to K643, L646 to F666, L671 to Y691, L707 to G727, and M764 to I784.

The protein belongs to the CPA3 antiporters (TC 2.A.63) subunit A family. As to quaternary structure, may form a heterooligomeric complex that consists of seven subunits: mnhA1, mnhB1, mnhC1, mnhD1, mnhE1, mnhF1 and mnhG1.

The protein localises to the cell membrane. Functionally, mnh complex is a Na(+)/H(+) antiporter involved in Na(+) excretion. The sequence is that of Na(+)/H(+) antiporter subunit A1 (mnhA1) from Staphylococcus epidermidis (strain ATCC 35984 / DSM 28319 / BCRC 17069 / CCUG 31568 / BM 3577 / RP62A).